Here is a 476-residue protein sequence, read N- to C-terminus: Exodeoxyribonuclease 7 large subunit (476 aa).

Belongs to the XseA family. As to quaternary structure, heterooligomer composed of large and small subunits.

Its subcellular location is the cytoplasm. The enzyme catalyses Exonucleolytic cleavage in either 5'- to 3'- or 3'- to 5'-direction to yield nucleoside 5'-phosphates.. In terms of biological role, bidirectionally degrades single-stranded DNA into large acid-insoluble oligonucleotides, which are then degraded further into small acid-soluble oligonucleotides. The sequence is that of Exodeoxyribonuclease 7 large subunit from Bartonella bacilliformis (strain ATCC 35685 / KC583 / Herrer 020/F12,63).